We begin with the raw amino-acid sequence, 268 residues long: Type II methyltransferase M2.DpnII (268 aa).

This sequence belongs to the N(4)/N(6)-methyltransferase family. In terms of assembly, homodimer.

The catalysed reaction is a 2'-deoxyadenosine in DNA + S-adenosyl-L-methionine = an N(6)-methyl-2'-deoxyadenosine in DNA + S-adenosyl-L-homocysteine + H(+). Functionally, a beta subtype methylase that recognizes the single- or double-stranded sequence 5'-GATC-3', methylates A-2 on one or both strands (respectively), and protects the DNA from cleavage by the DpnII endonuclease. Further methylates DNA that is already methylated at 5'-GATC-3' sites. Essential for establishment of a previously unmethylated plasmid transformed into the cell as single-stranded DNA, enhances plasmid transfer to DpnII-containing strains of Streptococcus pneumoniae. The sequence is that of Type II methyltransferase M2.DpnII from Streptococcus pneumoniae.